We begin with the raw amino-acid sequence, 496 residues long: Sporulation-killing factor biosynthesis protein SkfC (496 aa).

The next 7 membrane-spanning stretches (helical) occupy residues 1 to 21 (MNSL…LLFI), 224 to 244 (VSGM…LVFM), 248 to 268 (TSII…SLTL), 291 to 311 (LLGI…VFIC), 331 to 351 (IVQI…TSLL), 399 to 419 (LLMI…IIVS), and 443 to 463 (FIFG…CVLV).

It is found in the membrane. In terms of biological role, required for production of the bacteriocin SkfA. The sequence is that of Sporulation-killing factor biosynthesis protein SkfC from Bacillus subtilis (strain 168).